The following is a 432-amino-acid chain: Glutamate-1-semialdehyde 2,1-aminomutase (432 aa).

Residue Lys265 is modified to N6-(pyridoxal phosphate)lysine.

It belongs to the class-III pyridoxal-phosphate-dependent aminotransferase family. HemL subfamily. In terms of assembly, homodimer. Pyridoxal 5'-phosphate serves as cofactor.

It is found in the cytoplasm. The catalysed reaction is (S)-4-amino-5-oxopentanoate = 5-aminolevulinate. Its pathway is porphyrin-containing compound metabolism; protoporphyrin-IX biosynthesis; 5-aminolevulinate from L-glutamyl-tRNA(Glu): step 2/2. The polypeptide is Glutamate-1-semialdehyde 2,1-aminomutase (Vibrio cholerae serotype O1 (strain ATCC 39541 / Classical Ogawa 395 / O395)).